The following is an 87-amino-acid chain: UPF0473 protein Daud_0916 (87 aa).

The protein belongs to the UPF0473 family.

The protein is UPF0473 protein Daud_0916 of Desulforudis audaxviator (strain MP104C).